The primary structure comprises 338 residues: 1-aminocyclopropane-1-carboxylate deaminase (338 aa).

Lysine 51 is subject to N6-(pyridoxal phosphate)lysine. Residue serine 78 is the Nucleophile of the active site.

Belongs to the ACC deaminase/D-cysteine desulfhydrase family. As to quaternary structure, homotrimer. Requires pyridoxal 5'-phosphate as cofactor.

The catalysed reaction is 1-aminocyclopropane-1-carboxylate + H2O = 2-oxobutanoate + NH4(+). In terms of biological role, catalyzes a cyclopropane ring-opening reaction, the irreversible conversion of 1-aminocyclopropane-1-carboxylate (ACC) to ammonia and alpha-ketobutyrate. Allows growth on ACC as a nitrogen source. In Variovorax paradoxus (strain S110), this protein is 1-aminocyclopropane-1-carboxylate deaminase.